The following is a 377-amino-acid chain: Erythronate-4-phosphate dehydrogenase (377 aa).

Positions 59 and 81 each coordinate substrate. Asp162 is an NAD(+) binding site. Arg237 is a catalytic residue. An NAD(+)-binding site is contributed by Asp260. Glu265 is a catalytic residue. Residue His282 is the Proton donor of the active site. Gly285 contributes to the NAD(+) binding site. Tyr286 provides a ligand contact to substrate.

Belongs to the D-isomer specific 2-hydroxyacid dehydrogenase family. PdxB subfamily. As to quaternary structure, homodimer.

Its subcellular location is the cytoplasm. The catalysed reaction is 4-phospho-D-erythronate + NAD(+) = (R)-3-hydroxy-2-oxo-4-phosphooxybutanoate + NADH + H(+). Its pathway is cofactor biosynthesis; pyridoxine 5'-phosphate biosynthesis; pyridoxine 5'-phosphate from D-erythrose 4-phosphate: step 2/5. Catalyzes the oxidation of erythronate-4-phosphate to 3-hydroxy-2-oxo-4-phosphonooxybutanoate. This is Erythronate-4-phosphate dehydrogenase from Psychrobacter arcticus (strain DSM 17307 / VKM B-2377 / 273-4).